Here is a 201-residue protein sequence, read N- to C-terminus: Translation machinery-associated protein 22 (201 aa).

The SUI1 domain maps to 94 to 165; it reads VTIKRIERNK…EARAYIEKLL (72 aa).

This sequence belongs to the DENR family. As to quaternary structure, interacts with the 40S ribosomal subunit.

It localises to the cytoplasm. The chain is Translation machinery-associated protein 22 (TMA22) from Meyerozyma guilliermondii (strain ATCC 6260 / CBS 566 / DSM 6381 / JCM 1539 / NBRC 10279 / NRRL Y-324) (Yeast).